A 786-amino-acid polypeptide reads, in one-letter code: Endonuclease MutS2 (786 aa).

335-342 is a binding site for ATP; it reads GPNTGGKT. The 76-residue stretch at 711–786 folds into the Smr domain; it reads LDLRGERFEN…GLGVTVVELK (76 aa).

It belongs to the DNA mismatch repair MutS family. MutS2 subfamily. As to quaternary structure, homodimer. Binds to stalled ribosomes, contacting rRNA.

Functionally, endonuclease that is involved in the suppression of homologous recombination and thus may have a key role in the control of bacterial genetic diversity. Acts as a ribosome collision sensor, splitting the ribosome into its 2 subunits. Detects stalled/collided 70S ribosomes which it binds and splits by an ATP-hydrolysis driven conformational change. Acts upstream of the ribosome quality control system (RQC), a ribosome-associated complex that mediates the extraction of incompletely synthesized nascent chains from stalled ribosomes and their subsequent degradation. Probably generates substrates for RQC. This Bacillus cereus (strain Q1) protein is Endonuclease MutS2.